We begin with the raw amino-acid sequence, 507 residues long: Arabinose import ATP-binding protein AraG (507 aa).

ABC transporter domains are found at residues 14–249 (LRFN…MVGR) and 249–505 (RDIQ…LPRT). 46–53 (GENGAGKS) lines the ATP pocket.

It belongs to the ABC transporter superfamily. Arabinose importer (TC 3.A.1.2.2) family. In terms of assembly, the complex is composed of two ATP-binding proteins (AraG), two transmembrane proteins (AraH) and a solute-binding protein (AraF).

The protein resides in the cell inner membrane. It catalyses the reaction L-arabinose(out) + ATP + H2O = L-arabinose(in) + ADP + phosphate + H(+). In terms of biological role, part of the ABC transporter complex AraFGH involved in arabinose import. Responsible for energy coupling to the transport system. This Pseudomonas syringae pv. syringae (strain B728a) protein is Arabinose import ATP-binding protein AraG.